A 311-amino-acid polypeptide reads, in one-letter code: Protoheme IX farnesyltransferase (311 aa).

A run of 8 helical transmembrane segments spans residues 39–59 (LLAMAAGLSLALYVTGIPIGE), 61–81 (LPEILFAIFGSAFVIGAAGAF), 111–131 (ALVLGISLSLLGLLLLGVASP), 133–153 (AALFGFLGLFLYVVPYTMWSK), 162–182 (IGSVGGAVPPLIGWAAISGDL), 187–207 (IIGLFVVTVLWQMPHFYAIAI), 246–266 (FFFVSLSWFITIVALVLSLIW), and 287–307 (FVFSLNYLTILFTVIIGFSLL).

It belongs to the UbiA prenyltransferase family. Protoheme IX farnesyltransferase subfamily. As to quaternary structure, interacts with CtaA.

The protein resides in the cell membrane. It carries out the reaction heme b + (2E,6E)-farnesyl diphosphate + H2O = Fe(II)-heme o + diphosphate. The protein operates within porphyrin-containing compound metabolism; heme O biosynthesis; heme O from protoheme: step 1/1. Converts heme B (protoheme IX) to heme O by substitution of the vinyl group on carbon 2 of heme B porphyrin ring with a hydroxyethyl farnesyl side group. This chain is Protoheme IX farnesyltransferase, found in Shouchella clausii (strain KSM-K16) (Alkalihalobacillus clausii).